A 78-amino-acid polypeptide reads, in one-letter code: Acyl carrier protein (78 aa).

The Carrier domain occupies 2–77; the sequence is SDIEQRVKQA…SAIDYVTKKL (76 aa). Residue S37 is modified to O-(pantetheine 4'-phosphoryl)serine.

It belongs to the acyl carrier protein (ACP) family. Post-translationally, 4'-phosphopantetheine is transferred from CoA to a specific serine of apo-ACP by AcpS. This modification is essential for activity because fatty acids are bound in thioester linkage to the sulfhydryl of the prosthetic group.

The protein localises to the cytoplasm. It functions in the pathway lipid metabolism; fatty acid biosynthesis. In terms of biological role, carrier of the growing fatty acid chain in fatty acid biosynthesis. The polypeptide is Acyl carrier protein (Acinetobacter baumannii (strain AB307-0294)).